A 270-amino-acid polypeptide reads, in one-letter code: Non-structural maintenance of chromosomes element 1 homolog (270 aa).

The RING-type; atypical zinc-finger motif lies at 185–226 (CNVCHKIAIQCQLCENCGIPLHLQCAGIYFRGIANPLCPNCK). Positions 236–270 (LSQVSSQGPSHSQAAPVRGRNQRSRNISTVARTSR) are disordered. Composition is skewed to polar residues over residues 237-248 (SQVSSQGPSHSQ) and 259-270 (SRNISTVARTSR).

It belongs to the NSE1 family. Component of the SMC5-SMC6 complex.

Its subcellular location is the nucleus. The protein localises to the chromosome. The protein resides in the telomere. The catalysed reaction is S-ubiquitinyl-[E2 ubiquitin-conjugating enzyme]-L-cysteine + [acceptor protein]-L-lysine = [E2 ubiquitin-conjugating enzyme]-L-cysteine + N(6)-ubiquitinyl-[acceptor protein]-L-lysine.. In terms of biological role, RING-type zinc finger-containing E3 ubiquitin ligase that assembles with melanoma antigen protein (MAGE) to catalyze the direct transfer of ubiquitin from E2 ubiquitin-conjugating enzyme to a specific substrate. Within MAGE-RING ubiquitin ligase complex, MAGE stimulates and specifies ubiquitin ligase activity likely through recruitment and/or stabilization of the E2 ubiquitin-conjugating enzyme at the E3:substrate complex. Involved in maintenance of genome integrity, DNA damage response and DNA repair. The polypeptide is Non-structural maintenance of chromosomes element 1 homolog (nsmce1) (Xenopus tropicalis (Western clawed frog)).